A 96-amino-acid chain; its full sequence is Invertase 7 (96 aa).

Positions 1-19 (MLLQAFIFLLAGFAAKISA) are cleaved as a signal peptide. Asparagine 23 carries an N-linked (GlcNAc...) asparagine glycan. Residues 39-42 (WMND) and glutamine 60 each bind substrate. Aspartate 42 is an active-site residue. N-linked (GlcNAc...) asparagine glycans are attached at residues asparagine 64 and asparagine 76.

It belongs to the glycosyl hydrolase 32 family.

It carries out the reaction Hydrolysis of terminal non-reducing beta-D-fructofuranoside residues in beta-D-fructofuranosides.. The sequence is that of Invertase 7 (SUC7) from Saccharomyces cerevisiae (Baker's yeast).